A 505-amino-acid chain; its full sequence is MKKENLEEKPFLQMKGISKFFSGVQALDNVELKVYRGEVLALLGENGAGKSTLMKILSGVYTKDEGDIFIDEKKVDIKGIKEAEELGISIIHQELSLLSNLKIYENIFLGSEKYKGIFNKLDKDYMRSESEKLLSTIGFTADVDILAKDINIGEMQMIEIIKAISKKSKLIIMDEPTTALTEVETERLFKVINKLKSEGICIIYISHRLDEIFQICDRVNVLRDGKYVGEVKVKDTTKDDLITMMVGRKLEEQFPYKKVKKGDALLAVNNLSYKNKVKNISFEVRAGEILGLAGLMGSGRTELAKTIFGEYKKSSGDIYINDKKINITSPKEAIENGIAYLSEDRKKEGLILNMSVGNNISLCNLKKYENSIKKINKEKESKEIDDYIKKLSVKTPSANQIIKNLSGGNQQKAIIAKWIMISPNILIIDEPTRGIDVGAKKEIYEVLNEIKSLGKAIIMISSDMPEVLGISDRILVMSEGNLSGELSREEATQEKIMKYAVAFSN.

2 consecutive ABC transporter domains span residues 12–249 (LQMK…VGRK) and 259–504 (VKKG…VAFS). Residue 44-51 (GENGAGKS) coordinates ATP.

This sequence belongs to the ABC transporter superfamily. Ribose importer (TC 3.A.1.2.1) family. The complex is composed of an ATP-binding protein (RbsA), two transmembrane proteins (RbsC) and a solute-binding protein (RbsB).

It is found in the cell membrane. It catalyses the reaction D-ribose(out) + ATP + H2O = D-ribose(in) + ADP + phosphate + H(+). In terms of biological role, part of the ABC transporter complex RbsABC involved in ribose import. Responsible for energy coupling to the transport system. The chain is Ribose import ATP-binding protein RbsA from Clostridium tetani (strain Massachusetts / E88).